Reading from the N-terminus, the 262-residue chain is 5'-nucleotidase SurE (262 aa).

Positions 8, 9, 39, and 95 each coordinate a divalent metal cation.

It belongs to the SurE nucleotidase family. The cofactor is a divalent metal cation.

Its subcellular location is the cytoplasm. The catalysed reaction is a ribonucleoside 5'-phosphate + H2O = a ribonucleoside + phosphate. In terms of biological role, nucleotidase that shows phosphatase activity on nucleoside 5'-monophosphates. The polypeptide is 5'-nucleotidase SurE (Methanothermobacter thermautotrophicus (strain ATCC 29096 / DSM 1053 / JCM 10044 / NBRC 100330 / Delta H) (Methanobacterium thermoautotrophicum)).